The primary structure comprises 180 residues: PRA1 family protein F1 (180 aa).

Transmembrane regions (helical) follow at residues 63 to 83 (ANTV…VFLS), 84 to 104 (LIWN…WLFL), 123 to 143 (IVLI…DAKL), and 145 to 165 (IAVA…VRKT).

This sequence belongs to the PRA1 family. Interacts with PRA1F2. In terms of tissue distribution, expressed in hypocotyls, leaf bases and shoot apex.

It is found in the endosome membrane. Its function is as follows. May be involved in both secretory and endocytic intracellular trafficking in the endosomal/prevacuolar compartments. The sequence is that of PRA1 family protein F1 (PRA1F1) from Arabidopsis thaliana (Mouse-ear cress).